We begin with the raw amino-acid sequence, 85 residues long: uncharacterized protein (85 aa).

The protein belongs to the ycf76 family.

It is found in the plastid. Its subcellular location is the chloroplast. This is an uncharacterized protein from Oryza sativa subsp. japonica (Rice).